The primary structure comprises 411 residues: Dihydrosphingosine 1-phosphate phosphatase C823.11 (411 aa).

Residues 1–74 (MVHKKKNVDI…LDVYFMYTAT (74 aa)) are Lumenal-facing. Residues 75–95 (LGTHVFFMLALPIFFWSGCIY) traverse the membrane as a helical segment. Over 96-99 (YTLD) the chain is Cytoplasmic. Residues 100–120 (ITQLFAAGVYFSGCIKDYFCL) form a helical membrane-spanning segment. A phosphatase sequence motif I region spans residues 115–123 (KDYFCLPRP). Residues 121–170 (PRPRSPPMVRLTLSSDAEYEYGFPSTHTTNAMATGFYSLFLLLSMSDSMS) lie on the Lumenal side of the membrane. Residues 144-147 (PSTH) form a phosphatase sequence motif II region. The active-site Proton donor is the H147. The chain crosses the membrane as a helical span at residues 171–191 (SISYYFLLSLVLLYIASISLG). Positions 191-202 (GRIYCGMHGFMD) are phosphatase sequence motif III. Over 192-195 (RIYC) the chain is Cytoplasmic. A helical transmembrane segment spans residues 196–216 (GMHGFMDVSTGTILGVTLAIF). H198 serves as the catalytic Nucleophile. The Lumenal segment spans residues 217–233 (QWKYADFFHNVWSSSST). The chain crosses the membrane as a helical span at residues 234-254 (SVPILSVVLALFFIWFHPQPA). The Cytoplasmic segment spans residues 255 to 259 (ERCIC). The chain crosses the membrane as a helical span at residues 260-280 (LEDSISFISVIMGIDLGTWFA). The Lumenal segment spans residues 281–293 (SPESLSHLHDNLN). A helical membrane pass occupies residues 294–314 (SYFLLKFFVRVLFGVCMILIW). At 315–387 (KSFAKQALLA…VRFDIETIAR (73 aa)) the chain is on the cytoplasmic side. A helical membrane pass occupies residues 388–408 (IIVYSGIGFLCTYFAPKVFLK). Residues 409–411 (WKI) are Lumenal-facing.

Belongs to the type 2 lipid phosphate phosphatase family.

It is found in the endoplasmic reticulum membrane. In terms of biological role, dihydrosphingosine 1-phosphate phosphatase required for efficient ceramide synthesis from exogenous sphingoid bases. Involved in endocytosis and calcium-mediated signaling. The chain is Dihydrosphingosine 1-phosphate phosphatase C823.11 from Schizosaccharomyces pombe (strain 972 / ATCC 24843) (Fission yeast).